Consider the following 672-residue polypeptide: MTSIKNAELGWNEAGTPVSDQFDDVYFSNVNGLEETRYVFLKQNHLPERWQEFDQRRFVIGETGFGTGLNFLAVWQWFTEFRREYPEATLKELHFVSFEKYPLSKADLEKAHQSWPELAEFAEKLQQHYPAAVPECHRIVLEDGAITLDLWFGDIKDCMPLVPYAEQGLIDAWFLDGFAPSKNPEMWNQNLFNGMAKLAKQDCTVATFTAAGFVRRGLNEAGFAMKKVKGFGTKREMIAGSMEQREAHSNHLPWFNRTASTNHDSIAIIGGGIASAALAKTLVRRGQNVTLYCKDAQPAEGASGNRQGAVYPLLNGPHKGVSRVFAPGFLFARQFVDQAAQDIQFDHDWCGITQLMWDDKSADKLEKMLAGNFTPELIHKLSSEETAEKIGLPIDMASVHYPLGGWLCPAELTRGLIAKLENTELFEAKFEHQVKSLDWDEARKLWTLKANGQSFEHSTVVVANGSEFQTLSQTADLPMGQVKGQVSHAPATETLSKLKTVLCYDGYMTPVNPNNQHLCIGASYDRSHLDYEFDEDAQKDNAEKLVKCLPNQTWTKEVDTSGNLSRQGIRCVSRDHLPFVGNVGDFETIKTQYADLQNQQEQDVEAIHQFPNLFCFLGLGSRGLSSAPLMAEVLASQICGDPLPLPVDVLTELHPSRMWVRKLRKGKAITEL.

The tract at residues 1 to 243 is tRNA (mnm(5)s(2)U34)-methyltransferase; that stretch reads MTSIKNAELG…KREMIAGSME (243 aa). The tract at residues 269–672 is FAD-dependent cmnm(5)s(2)U34 oxidoreductase; that stretch reads IGGGIASAAL…LRKGKAITEL (404 aa).

It in the N-terminal section; belongs to the methyltransferase superfamily. tRNA (mnm(5)s(2)U34)-methyltransferase family. The protein in the C-terminal section; belongs to the DAO family. FAD serves as cofactor.

The protein resides in the cytoplasm. The catalysed reaction is 5-aminomethyl-2-thiouridine(34) in tRNA + S-adenosyl-L-methionine = 5-methylaminomethyl-2-thiouridine(34) in tRNA + S-adenosyl-L-homocysteine + H(+). In terms of biological role, catalyzes the last two steps in the biosynthesis of 5-methylaminomethyl-2-thiouridine (mnm(5)s(2)U) at the wobble position (U34) in tRNA. Catalyzes the FAD-dependent demodification of cmnm(5)s(2)U34 to nm(5)s(2)U34, followed by the transfer of a methyl group from S-adenosyl-L-methionine to nm(5)s(2)U34, to form mnm(5)s(2)U34. In Vibrio campbellii (strain ATCC BAA-1116), this protein is tRNA 5-methylaminomethyl-2-thiouridine biosynthesis bifunctional protein MnmC.